A 518-amino-acid chain; its full sequence is Cytochrome P450 704C1 (518 aa).

2 helical membrane passes run I5 to S25 and V299 to I319. Position 461 (C461) interacts with heme.

The protein belongs to the cytochrome P450 family. Heme is required as a cofactor.

It localises to the membrane. This chain is Cytochrome P450 704C1 (CYP704C1), found in Pinus taeda (Loblolly pine).